Reading from the N-terminus, the 68-residue chain is MKLQEIKDFVKELRGLSQEELAKKENELKKELFDLRFQAAAGQLEKTARLDEVKKQIARVKTVQSEMK.

It belongs to the universal ribosomal protein uL29 family.

The polypeptide is Large ribosomal subunit protein uL29 (Streptococcus agalactiae serotype Ia (strain ATCC 27591 / A909 / CDC SS700)).